The following is a 119-amino-acid chain: Ribonuclease P protein component (119 aa).

This sequence belongs to the RnpA family. Consists of a catalytic RNA component (M1 or rnpB) and a protein subunit.

It carries out the reaction Endonucleolytic cleavage of RNA, removing 5'-extranucleotides from tRNA precursor.. Its function is as follows. RNaseP catalyzes the removal of the 5'-leader sequence from pre-tRNA to produce the mature 5'-terminus. It can also cleave other RNA substrates such as 4.5S RNA. The protein component plays an auxiliary but essential role in vivo by binding to the 5'-leader sequence and broadening the substrate specificity of the ribozyme. The sequence is that of Ribonuclease P protein component from Mycolicibacterium paratuberculosis (strain ATCC BAA-968 / K-10) (Mycobacterium paratuberculosis).